The following is a 142-amino-acid chain: Probable transport accessory protein MmpS1 (142 aa).

2 consecutive transmembrane segments (helical) span residues 8 to 28 and 81 to 101; these read FWIPMVIVIVVAVAAVTVSRL and VVNAAVPWSFTIVTTLTAVVA.

This sequence belongs to the MmpS family.

The protein localises to the cell membrane. This Mycobacterium bovis (strain ATCC BAA-935 / AF2122/97) protein is Probable transport accessory protein MmpS1 (mmpS1).